Consider the following 244-residue polypeptide: MRMKRFLTIVQILLVVIIIIFGYKIVQTYIEDKQERANYEKLQQKFQMLMSKHQEHVRPQFESLEKINKDIVGWIKLSGTSLNYPVLQGKTNHDYLNLDFEREHRRKGSIFMDFRNELKNLNHNTILYGHHVGDNTMFDVLEDYLKQSFYEKHKIIEFDNKYGKYQLQVFSAYKTTTKDNYIRTDFENDQDYQQFLDETKRKSVINSDVNVTVKDRIMTLSTCEDAYSETTKRIVVVAKIIKVS.

The Cytoplasmic portion of the chain corresponds to 1–6 (MRMKRF). The helical transmembrane segment at 7-24 (LTIVQILLVVIIIIFGYK) threads the bilayer. Topologically, residues 25 to 244 (IVQTYIEDKQ…VVVAKIIKVS (220 aa)) are extracellular. C223 functions as the Acyl-thioester intermediate in the catalytic mechanism.

Belongs to the bacterial sortase family. Class B subfamily.

It localises to the cell membrane. The catalysed reaction is The enzyme catalyzes a cell wall sorting reaction in which a surface protein with a sorting signal containing a NPXTN motif is cleaved between the Thr and Asn residue. The resulting threonine carboxyl end of the protein is covalently attached to a pentaglycine cross-bridge of peptidoglycan.. Its activity is regulated as follows. Inhibited by MTSET (2-(Trimethylammonium)-ethyl-methanethiosulfonate) and E64 ([n- (l-3-trans-carboxyoxirane-2-carbonyl)-l-leucyl]-amido(4-guanido)butane). Inhibited by coptisine. In terms of biological role, transpeptidase that anchors surface proteins to the cell wall. Recognizes and modifies its substrate by proteolytic cleavage of a C-terminal sorting signal. Following cleavage, a covalent intermediate is formed via a thioester bond between the sortase and its substrate, which is then transferred and covalently attached to the cell wall. This sortase recognizes an Asn-Pro-Gln-Thr-Asn (NPQTN) motif in IsdC, which is cleaved by the sortase between the threonine and aspargine residues; may only have 1 substrate in this bacterium. May be dedicated to the process of iron acquisition during bacterial infection. The polypeptide is Sortase B (Staphylococcus aureus (strain NCTC 8325 / PS 47)).